Reading from the N-terminus, the 195-residue chain is Probable nicotinate-nucleotide adenylyltransferase (195 aa).

Belongs to the NadD family.

It catalyses the reaction nicotinate beta-D-ribonucleotide + ATP + H(+) = deamido-NAD(+) + diphosphate. It functions in the pathway cofactor biosynthesis; NAD(+) biosynthesis; deamido-NAD(+) from nicotinate D-ribonucleotide: step 1/1. Its function is as follows. Catalyzes the reversible adenylation of nicotinate mononucleotide (NaMN) to nicotinic acid adenine dinucleotide (NaAD). This Dictyoglomus thermophilum (strain ATCC 35947 / DSM 3960 / H-6-12) protein is Probable nicotinate-nucleotide adenylyltransferase.